Consider the following 551-residue polypeptide: HTH-type transcriptional regulator SgrR (551 aa).

The HTH marR-type domain maps to 1–116 (MPSARLQQQF…LVSHLGRSFR (116 aa)). The segment at residues 26 to 49 (LNELAALLSCSRRHMRTLLNTMQD) is a DNA-binding region (H-T-H motif). Residues 163–492 (ELEADIAHHW…IDWQADAARW (330 aa)) form a solute-binding region.

Functionally, activates the small RNA gene sgrS under glucose-phosphate stress conditions as well as yfdZ. Represses its own transcription under both stress and non-stress conditions. Might act as a sensor of the intracellular accumulation of phosphoglucose by binding these molecules in its C-terminal solute-binding domain. In Shigella flexneri serotype 5b (strain 8401), this protein is HTH-type transcriptional regulator SgrR.